The sequence spans 363 residues: Wortmanamides biosynthesis cluster protein C (363 aa).

Transmembrane regions (helical) follow at residues 15 to 35 (FVTL…RFVA), 48 to 68 (WLAV…LMAI), 95 to 115 (IAGL…ILAF), 129 to 149 (ICIY…CIFQ), 175 to 195 (ILGG…LAMI), 210 to 230 (VTVL…KIAV), and 237 to 257 (LYAF…ALLC). A disordered region spans residues 293-312 (SSSKNSRKHGPYDSDQSPGP). Asparagine 321 carries an N-linked (GlcNAc...) asparagine glycan. The segment at 344–363 (SPITHPQAYSKQTTRQFDVV) is disordered.

Belongs to the SAT4 family.

It is found in the membrane. It functions in the pathway secondary metabolite biosynthesis. Part of the gene cluster that mediates the biosynthesis of wortmanamides A and B, reduced long-chain polyketides amidated with a specific omega-amino acid, 5-aminopentanoic acid (5PA). The PKS modules of TwmB are involved in the synthesis of the polyketide backbone, whereas the non-canonical C domain of TwmB is a bonafide condensation domain that specifically selects 5PA and catalyzes amidation to release polyketide chain. The C domain clearly prefers C16 and C18 fatty acyl substrates, which is consistent with simultaneous formation of both octaketide and nonaketide acyl amides wortmanamides A and B. Because TwmB lacks a designated enoylreductase (ER) domain, the required activity is provided the enoyl reductase TwmE. The roles of the remaining enzymes have still to be clarified. The protein is Wortmanamides biosynthesis cluster protein C of Talaromyces wortmannii (Penicillium wortmannii).